Reading from the N-terminus, the 550-residue chain is Mitochondrial distribution and morphology protein 34 (550 aa).

Residues 1–208 (MAFNFNWSPL…CPEQMSKEDH (208 aa)) form the SMP-LTD domain. 3 disordered regions span residues 294 to 313 (VDKP…LVKS), 358 to 505 (RNAK…ILEQ), and 519 to 550 (VYDE…TAAS). Residues 300–310 (SSTTPLTTPSL) are compositionally biased toward low complexity. A compositionally biased stretch (basic residues) spans 364–376 (ANRKKKTRVVNLR). Polar residues-rich tracts occupy residues 391 to 407 (MSDS…TMSD) and 458 to 467 (AEISQPQVAR). Residues 481–495 (SENDKRSDSKRRGPR) are compositionally biased toward basic and acidic residues.

The protein belongs to the MDM34 family. Component of the ER-mitochondria encounter structure (ERMES) or MDM complex, composed of MMM1, MDM10, MDM12 and MDM34.

The protein resides in the mitochondrion outer membrane. Functionally, component of the ERMES/MDM complex, which serves as a molecular tether to connect the endoplasmic reticulum (ER) and mitochondria. Components of this complex are involved in the control of mitochondrial shape and protein biogenesis, and function in nonvesicular lipid trafficking between the ER and mitochondria. MDM34 is required for the interaction of the ER-resident membrane protein MMM1 and the outer mitochondrial membrane-resident beta-barrel protein MDM10. This chain is Mitochondrial distribution and morphology protein 34, found in Pyricularia oryzae (strain 70-15 / ATCC MYA-4617 / FGSC 8958) (Rice blast fungus).